The primary structure comprises 183 residues: Adenine phosphoribosyltransferase (183 aa).

This sequence belongs to the purine/pyrimidine phosphoribosyltransferase family. As to quaternary structure, homodimer.

It localises to the cytoplasm. The enzyme catalyses AMP + diphosphate = 5-phospho-alpha-D-ribose 1-diphosphate + adenine. It participates in purine metabolism; AMP biosynthesis via salvage pathway; AMP from adenine: step 1/1. Functionally, catalyzes a salvage reaction resulting in the formation of AMP, that is energically less costly than de novo synthesis. This Erwinia tasmaniensis (strain DSM 17950 / CFBP 7177 / CIP 109463 / NCPPB 4357 / Et1/99) protein is Adenine phosphoribosyltransferase.